The sequence spans 436 residues: Acetyl-CoA decarbonylase/synthase complex subunit delta 2 (436 aa).

The protein belongs to the CdhD family. Heterodimer of delta and gamma chains. The ACDS complex is made up of alpha, epsilon, beta, gamma and delta chains with a probable stoichiometry of (alpha(2)epsilon(2))(4)-beta(8)-(gamma(1)delta(1))(8) (Potential).

It participates in one-carbon metabolism; methanogenesis from acetate. Functionally, part of a complex that catalyzes the reversible cleavage of acetyl-CoA, allowing growth on acetate as sole source of carbon and energy. Probably maintains the overall quaternary structure of the ACDS complex. The sequence is that of Acetyl-CoA decarbonylase/synthase complex subunit delta 2 (cdhD2) from Methanosarcina acetivorans (strain ATCC 35395 / DSM 2834 / JCM 12185 / C2A).